A 1049-amino-acid polypeptide reads, in one-letter code: DEAD-box ATP-dependent RNA helicase 42 (1049 aa).

Disordered stretches follow at residues 1–279 (MGSS…DEID) and 299–358 (MPAA…DDEE). A compositionally biased stretch (basic and acidic residues) spans 64–106 (KERDREERKAREREEREKEKERERARRREERDREERSRRREAA). Residues 118 to 131 (RKRRRRSSHHHHHH) are compositionally biased toward basic residues. Composition is skewed to basic and acidic residues over residues 161 to 170 (KKEEEQKQLD) and 181 to 199 (KEWQ…REQE). The segment covering 201–214 (AGVGTSAAAAAAPA) has biased composition (low complexity). Residues 229 to 239 (DGEESDEEGNQ) show a composition bias toward acidic residues. Low complexity predominate over residues 262–272 (NGGDNANGANA). Residues 304–313 (VDDKNDKSAK) show a composition bias toward basic and acidic residues. Over residues 335 to 358 (EDSDSDYADDEDDEGGSEDEDDEE) the composition is skewed to acidic residues. Positions 424 to 452 (KTWVQSGLTSKLLDTIKKLGFEKPMSIQA) match the Q motif motif. The region spanning 455–633 (LPIIMSGRDC…RKVLTKPVEI (179 aa)) is the Helicase ATP-binding domain. 468 to 475 (AKTGSGKT) serves as a coordination point for ATP. The DEAD box motif lies at 581 to 584 (DEAD). A Helicase C-terminal domain is found at 644–805 (DITQLVEVRP…AVPEDLKGLA (162 aa)). The interval 816–868 (TEQAHGTGYGGSGFKFNEEEDEARKSAKKAQAREYGYEEDKSDSDSDEEGGVR) is disordered. The span at 855–864 (DKSDSDSDEE) shows a compositional bias: acidic residues. The stretch at 1012–1037 (TELSVKKAKAELKRVLEDCANHALNL) forms a coiled coil.

The protein belongs to the DEAD box helicase family. DDX46/PRP5 subfamily.

It catalyses the reaction ATP + H2O = ADP + phosphate + H(+). The chain is DEAD-box ATP-dependent RNA helicase 42 from Oryza sativa subsp. japonica (Rice).